A 1054-amino-acid chain; its full sequence is DIS3-like exonuclease 1 (1054 aa).

The CSD1 domain maps to 236–309; sequence AGIKSGRYIQ…PKNEWKGRTV (74 aa). The CSD2 domain maps to 365-431; it reads ILVTPWDYRI…GEIATILVEN (67 aa). The RNB domain maps to 465 to 816; the sequence is RKDLRKSHLV…VHRLLMAAIS (352 aa). At serine 989 the chain carries Phosphoserine.

This sequence belongs to the RNR ribonuclease family. In terms of assembly, component of the RNA exosome complex. The catalytically inactive RNA exosome core (Exo-9) complex is believed to associate with catalytic subunits EXOSC10, and DIS3 or DIS3L in cytoplasmic- and nuclear-specific RNA exosome complex forms. It depends on Mg(2+) as a cofactor.

It is found in the cytoplasm. It catalyses the reaction Exonucleolytic cleavage in the 3'- to 5'-direction to yield nucleoside 5'-phosphates.. Its function is as follows. Catalytic component of the RNA exosome complex which has 3'-&gt;5' exoribonuclease activity and participates in a multitude of cellular RNA processing and degradation events. In the cytoplasm, the RNA exosome complex is involved in general mRNA turnover and specifically degrades inherently unstable mRNAs containing AU-rich elements (AREs) within their 3' untranslated regions, and in RNA surveillance pathways, preventing translation of aberrant mRNAs. It seems to be involved in degradation of histone mRNA. This is DIS3-like exonuclease 1 (DIS3L) from Homo sapiens (Human).